Reading from the N-terminus, the 476-residue chain is MNIKLLDKITPLEQDFAKWYTDVITKGNLATYGVLKGNIVFMPNSYGIWENVQSNFNKIIKELNVKNLYLPTLIPESLINSEKDHVQGFAPELITVEKVGDKVLNEKLFLRPTSEVLFAEYFKTQLNSYNDLPLLLNQWANVFRWEKTTSPFLRNSEFLWQEGHTSHYSEEEAHQFSKKMIQIYANFFEEFLAIPVIIGQKTESEKFAGAHTTYTIEAMMKDGRALQSGTSHYLGQNFAKAFDISFKDKDNSKSFVYQTSWGISTRLIGAIIMVHGDNRGIIMPPKIATNQVDIITVFANKNPEVLQKANDLFKTLKNDFRVRINDSNKSVGFKAAQSEIEGTPIRIEIGPEDLKQNKVILIRRDTQEKIDVKIDELKSEIFSQIEKIHENLLMQAKRLLNEKIVDVEDYESLKKEIAKGNFVRVPFDGDKKEEEIIKKETFATPRCIPLNFIGETKKCIMTNKETKRYVIFAKSY.

Belongs to the class-II aminoacyl-tRNA synthetase family. ProS type 3 subfamily. Homodimer.

Its subcellular location is the cytoplasm. The enzyme catalyses tRNA(Pro) + L-proline + ATP = L-prolyl-tRNA(Pro) + AMP + diphosphate. Its function is as follows. Catalyzes the attachment of proline to tRNA(Pro) in a two-step reaction: proline is first activated by ATP to form Pro-AMP and then transferred to the acceptor end of tRNA(Pro). The sequence is that of Proline--tRNA ligase from Mycoplasma mobile (strain ATCC 43663 / 163K / NCTC 11711) (Mesomycoplasma mobile).